Here is a 145-residue protein sequence, read N- to C-terminus: Mite group 2 allergen Eur m 2 (145 aa).

An N-terminal signal peptide occupies residues methionine 1–alanine 16. Cystine bridges form between cysteine 24/cysteine 135, cysteine 37/cysteine 43, and cysteine 89/cysteine 94.

Belongs to the NPC2 family.

The protein resides in the secreted. The chain is Mite group 2 allergen Eur m 2 (EURM2) from Euroglyphus maynei (Mayne's house dust mite).